The chain runs to 43 residues: Protein PsbN (43 aa).

The chain crosses the membrane as a helical span at residues 5 to 27 (TLVAIPISCLLVSFTGYALYTAF).

The protein belongs to the PsbN family.

Its subcellular location is the plastid. The protein localises to the chloroplast thylakoid membrane. In terms of biological role, may play a role in photosystem I and II biogenesis. The sequence is that of Protein PsbN from Sphagnum cuspidatum (Bog moss).